Consider the following 92-residue polypeptide: Large ribosomal subunit protein eL34 (92 aa).

It belongs to the eukaryotic ribosomal protein eL34 family.

This Staphylothermus marinus (strain ATCC 43588 / DSM 3639 / JCM 9404 / F1) protein is Large ribosomal subunit protein eL34.